Here is a 501-residue protein sequence, read N- to C-terminus: Probable cytochrome P450 6t3 (501 aa).

Position 444 (cysteine 444) interacts with heme.

This sequence belongs to the cytochrome P450 family. It depends on heme as a cofactor.

It localises to the endoplasmic reticulum membrane. The protein resides in the microsome membrane. May be involved in the metabolism of insect hormones and in the breakdown of synthetic insecticides. The polypeptide is Probable cytochrome P450 6t3 (Cyp6t3) (Drosophila melanogaster (Fruit fly)).